Consider the following 561-residue polypeptide: Putative transport protein YbjL (561 aa).

The next 5 membrane-spanning stretches (helical) occupy residues 8 to 28 (LLNGNYILLLFVVLALGLCLG), 32 to 52 (LGSIQLGNSIGVLVVSLLLGQ), 66 to 86 (FMLFIFCVGVEAGPNFFSIFF), 94 to 114 (MLALVMVGSALLIALGLGKLF), and 158 to 178 (NLSLGYALTYLIGLVSLIVGA). 2 RCK C-terminal domains span residues 202 to 288 (LDTD…SFRN) and 292 to 373 (VFDR…RIGF). 5 consecutive transmembrane segments (helical) span residues 383–403 (LLAFCAFFIIGLMIGMITFQF), 406–426 (FSFGMGNAAGLLFAGIMLGFM), 451–471 (VFMAGVGLSAGSGINNGLGAI), 475–495 (MLVAGLIVSLVPVVICFLFGA), and 540–560 (AIANVLLTLAGTIIVMVWPGL).

It belongs to the AAE transporter (TC 2.A.81) family. YbjL subfamily.

It localises to the cell membrane. The sequence is that of Putative transport protein YbjL from Escherichia fergusonii (strain ATCC 35469 / DSM 13698 / CCUG 18766 / IAM 14443 / JCM 21226 / LMG 7866 / NBRC 102419 / NCTC 12128 / CDC 0568-73).